Consider the following 399-residue polypeptide: C-type lectin domain family 4 member M (399 aa).

Over 1-49 (MSDSKEQRVQPLGLLEEDPTTSGIRLFPRDFQFQQTHGHKSSTGCLGHG) the chain is Cytoplasmic. Residues 14–15 (LL) carry the Endocytosis signal motif. A helical; Signal-anchor for type II membrane protein membrane pass occupies residues 50 to 70 (PLVLQLLSFTLLAGVLVAILV). Topologically, residues 71 to 399 (QVYKVPSSLS…KKPTACFRDE (329 aa)) are extracellular. N-linked (GlcNAc...) asparagine glycosylation occurs at Asn-92. Tandem repeats lie at residues 108–130 (KLQEIYQELIQLKAAVGELPEKS), 131–153 (TLQEIYQELTRLKAAVGELPEKS), 154–176 (RLQEIYQELTRLKAAVGELPEKS), 177–199 (KQQEIYQELTRLKAAVGELPEKS), 200–222 (KQQEIYQELTRLKAAVGELPEKS), 223–245 (KQQEIYQELTRLKAAVGELPDQS), and 246–268 (KQQQIYQELTDLKTAFERLCCRC). A 7 X approximate tandem repeats region spans residues 108 to 269 (KLQEIYQELI…AFERLCCRCP (162 aa)). Cystine bridges form between Cys-265/Cys-395, Cys-268/Cys-279, Cys-296/Cys-389, and Cys-368/Cys-381. In terms of domain architecture, C-type lectin spans 274-390 (FFQGNCYFIS…CNVDNYWICK (117 aa)). Residues Glu-359, Asn-361, Ser-363, Glu-366, Asn-377, and Asp-378 each coordinate Ca(2+). An N-linked (GlcNAc...) asparagine glycan is attached at Asn-361.

As to quaternary structure, homotetramer.

The protein resides in the membrane. In terms of biological role, probable pathogen-recognition receptor involved in peripheral immune surveillance in liver. May mediate the endocytosis of pathogens which are subsequently degraded in lysosomal compartments. Probably recognizes in a calcium-dependent manner high mannose N-linked oligosaccharides in a variety of pathogen antigens. Is a receptor for ICAM3, probably by binding to mannose-like carbohydrates. This is C-type lectin domain family 4 member M (CLEC4M) from Hylobates lar (Lar gibbon).